Consider the following 445-residue polypeptide: tRNA-2-methylthio-N(6)-dimethylallyladenosine synthase (445 aa).

An MTTase N-terminal domain is found at 3 to 124 (KKLYIKTYGC…LPELISKVVR (122 aa)). Residues cysteine 12, cysteine 48, cysteine 87, cysteine 162, cysteine 166, and cysteine 169 each coordinate [4Fe-4S] cluster. The region spanning 148 to 380 (YTQGASSFIS…QKELATQQLA (233 aa)) is the Radical SAM core domain. One can recognise a TRAM domain in the interval 383 to 445 (ESCVGSTMKV…ALNSLTGEIL (63 aa)).

It belongs to the methylthiotransferase family. MiaB subfamily. Monomer. Requires [4Fe-4S] cluster as cofactor.

Its subcellular location is the cytoplasm. It carries out the reaction N(6)-dimethylallyladenosine(37) in tRNA + (sulfur carrier)-SH + AH2 + 2 S-adenosyl-L-methionine = 2-methylsulfanyl-N(6)-dimethylallyladenosine(37) in tRNA + (sulfur carrier)-H + 5'-deoxyadenosine + L-methionine + A + S-adenosyl-L-homocysteine + 2 H(+). Its function is as follows. Catalyzes the methylthiolation of N6-(dimethylallyl)adenosine (i(6)A), leading to the formation of 2-methylthio-N6-(dimethylallyl)adenosine (ms(2)i(6)A) at position 37 in tRNAs that read codons beginning with uridine. The polypeptide is tRNA-2-methylthio-N(6)-dimethylallyladenosine synthase (Rickettsia typhi (strain ATCC VR-144 / Wilmington)).